The following is a 2122-amino-acid chain: Unique GC organizer UGO (2122 aa).

Helical transmembrane passes span 19-39 (FAVA…TNSL), 50-70 (LFGM…FVIV), 82-102 (TYIM…MQLI), 115-135 (VLTF…VLIG), and 145-165 (VVCS…DVGL). 13 disordered regions span residues 337 to 403 (AALH…HRSA), 422 to 532 (FRGL…GPFV), 565 to 591 (DLRE…SGLQ), 627 to 762 (HRRG…GRAN), 785 to 815 (HAAS…CSAS), 848 to 870 (MSRR…RAER), 903 to 949 (SKEG…ASAN), 999 to 1046 (RNET…LHSR), 1068 to 1308 (PSDL…HEAV), 1328 to 1368 (AGLS…SEEE), 1515 to 1540 (ANSS…AASA), 1560 to 1608 (AAEH…TPHT), and 1639 to 1727 (QGLG…TFFG). Positions 363 to 374 (RSNTLRGCSGQV) are enriched in polar residues. Basic and acidic residues-rich tracts occupy residues 503–525 (LRMD…DPAK), 565–585 (DLRE…HAAA), and 632–645 (GARD…RGEP). Over residues 672 to 687 (RLSRSRRHKTRTYRRG) the composition is skewed to basic residues. The span at 690 to 699 (SDGTTAGTSD) shows a compositional bias: low complexity. Over residues 707–720 (LEDEGSDSGQESES) the composition is skewed to acidic residues. Positions 725–735 (RRRMRSSRNRR) are enriched in basic residues. Residues 741 to 750 (EDSSSGTSVR) are compositionally biased toward low complexity. Over residues 751-760 (SEGRHCREGR) the composition is skewed to basic and acidic residues. Asn-762 carries an N-linked (GlcNAc...) asparagine glycan. Positions 848-860 (MSRRRRREGKSRP) are enriched in basic residues. 2 stretches are compositionally biased toward polar residues: residues 999-1011 (RNET…SPAT) and 1072-1097 (SLFT…SARI). Asn-1000 carries an N-linked (GlcNAc...) asparagine glycan. Residue Asn-1165 is glycosylated (N-linked (GlcNAc...) asparagine). Residues 1220–1261 (SREDLVGEADSHVSPEKEVFVSSRREKREEQVPRSRREERRD) are compositionally biased toward basic and acidic residues. Basic residues predominate over residues 1262–1276 (RRGRRWRRGRRRRKA). 2 stretches are compositionally biased toward basic and acidic residues: residues 1277–1289 (RECS…RDSS) and 1345–1359 (GDMR…HSDG). Over residues 1515 to 1527 (ANSSTAVSSSLPD) the composition is skewed to polar residues. Asn-1516 carries N-linked (GlcNAc...) asparagine glycosylation. Low complexity-rich tracts occupy residues 1528–1540 (STAW…AASA) and 1597–1608 (TQTPQTPQTPHT). The span at 1684-1693 (LSATPSTRLQ) shows a compositional bias: polar residues. The next 5 membrane-spanning stretches (helical) occupy residues 1859–1879 (VAWL…LLRL), 1956–1976 (MLAL…WHLI), 1989–2009 (IIPA…ILAV), 2017–2037 (IFLL…PPGV), and 2040–2060 (VQLF…GQLF). Positions 2102–2122 (DEGSEDEVSMGSGHLVGDRSA) are disordered.

As to quaternary structure, interacts with guanylate cyclase GC; the interaction regulates guanylate cyclase GC trafficking and catalytic activity.

The protein localises to the cell membrane. In terms of biological role, in tachyzoites, required for the cellular trafficking of guanylate cyclase GC to the cell membrane and for GC guanylate cyclase activity. The protein is Unique GC organizer UGO of Toxoplasma gondii (strain ATCC 50853 / GT1).